We begin with the raw amino-acid sequence, 110 residues long: Iron-sulfur cluster assembly protein CyaY (110 aa).

This sequence belongs to the frataxin family.

Involved in iron-sulfur (Fe-S) cluster assembly. May act as a regulator of Fe-S biogenesis. The sequence is that of Iron-sulfur cluster assembly protein CyaY from Ectopseudomonas mendocina (strain ymp) (Pseudomonas mendocina).